Here is a 302-residue protein sequence, read N- to C-terminus: Ornithine carbamoyltransferase (302 aa).

Residues 52 to 55 (STRT), Gln79, Arg103, and 130 to 133 (HPCQ) each bind carbamoyl phosphate. L-ornithine contacts are provided by residues Asn161, Asp221, and 225–226 (SM). Carbamoyl phosphate-binding positions include 261-262 (CL) and Arg289.

Belongs to the aspartate/ornithine carbamoyltransferase superfamily. OTCase family.

Its subcellular location is the cytoplasm. It catalyses the reaction carbamoyl phosphate + L-ornithine = L-citrulline + phosphate + H(+). It participates in amino-acid biosynthesis; L-arginine biosynthesis; L-arginine from L-ornithine and carbamoyl phosphate: step 1/3. In terms of biological role, reversibly catalyzes the transfer of the carbamoyl group from carbamoyl phosphate (CP) to the N(epsilon) atom of ornithine (ORN) to produce L-citrulline. The sequence is that of Ornithine carbamoyltransferase from Methanosarcina acetivorans (strain ATCC 35395 / DSM 2834 / JCM 12185 / C2A).